Reading from the N-terminus, the 510-residue chain is NAD(P)H-quinone oxidoreductase subunit 2 A, chloroplastic (510 aa).

13 helical membrane passes run 24–44 (LLLF…GLIL), 57–77 (IPWL…ALLF), 99–119 (IFQF…VEYI), 124–144 (MAIT…MFLC), 149–169 (LITI…LSGY), 183–203 (YLLM…WLYG), 227–247 (PGIS…LSLA), 295–315 (WHLL…LIAI), 323–343 (MLAY…IVGD), 354–374 (YMLF…SFGL), 395–415 (ALSL…AGFF), 418–438 (LHLF…IGLL), and 484–504 (MIVC…IIAI).

The protein belongs to the complex I subunit 2 family. In terms of assembly, NDH is composed of at least 16 different subunits, 5 of which are encoded in the nucleus.

Its subcellular location is the plastid. The protein localises to the chloroplast thylakoid membrane. It carries out the reaction a plastoquinone + NADH + (n+1) H(+)(in) = a plastoquinol + NAD(+) + n H(+)(out). It catalyses the reaction a plastoquinone + NADPH + (n+1) H(+)(in) = a plastoquinol + NADP(+) + n H(+)(out). In terms of biological role, NDH shuttles electrons from NAD(P)H:plastoquinone, via FMN and iron-sulfur (Fe-S) centers, to quinones in the photosynthetic chain and possibly in a chloroplast respiratory chain. The immediate electron acceptor for the enzyme in this species is believed to be plastoquinone. Couples the redox reaction to proton translocation, and thus conserves the redox energy in a proton gradient. The chain is NAD(P)H-quinone oxidoreductase subunit 2 A, chloroplastic from Ranunculus macranthus (Large buttercup).